Consider the following 735-residue polypeptide: MIDGEAYFEKNSTGKLGSWGWRDVNLQFIICTLPVPIYFVVVAIWTINGASNSYRFPFLQTYMILTDRFWLFFRCFTIVAWCGWCSNYIFFPCLMNAILYIISLSLSRDTTFILFIFYQMNKLITVIRDFSYSVYNWCYETVIGENTRKYKMTWKVPKESLKIIVNKNADARMQRELENRTAKDEANALTSRRRVFGSYALIGTQRAEFIQFRQIKHIDITNASLDFLYNLKQLKHDNLANFYGIQLNDDLNTMTILHALVERGTLEEFCLDRDFGMDETFKSAFMRDILKGLQYLHLSPVAYHGHLHAATCLIDINWVLKIALYGVTNFVCDNFDAENITMPDRSDYTISYAQYVCFPPEHIREYDATGKLPTRFVRGSKQGDIYCVGMIFYMMIEREDPYRLIHSVERPGSGLMMEILDHNLMPFISNNETQEDTLLDKCKECWNRDPEKRPTIENLRNAIAICYADSKGNLIDQMIRMNEKYADELETLVAARSADLALAQMQTMRLLNEMLPASIAKDLKNGVIAPARSYASATVMFVQICDFIVILKRRPPKEVIGFLNDIFDQFDTVIKRHDAYKVETTGETYMVASGVPNENEGRHVFEVAEMSLEIRAISLSYTLENDKNYKLRVRIGFHAGPIAAGVIGIKNPRYCLFGDTVNFASRMQSNCPPLQIQTSEITARMLLATHEYKLVKRGIVHVKGKGEVNCYWLNEHIHKDEEIEESGTISHPLES.

An N-linked (GlcNAc...) asparagine glycan is attached at N11. The chain crosses the membrane as a helical span at residues 28–48; that stretch reads FIICTLPVPIYFVVVAIWTIN. The region spanning 188–465 is the Protein kinase domain; the sequence is ALTSRRRVFG…IENLRNAIAI (278 aa). A Guanylate cyclase domain is found at 538–668; it reads TVMFVQICDF…DTVNFASRMQ (131 aa).

It belongs to the adenylyl cyclase class-4/guanylyl cyclase family. As to expression, expressed bilaterally in ASK, ASI and ASJ sensory neurons.

It localises to the cell membrane. The enzyme catalyses GTP = 3',5'-cyclic GMP + diphosphate. Guanylate cyclase involved in the production of the second messenger cGMP. May be involved in sensitivity to quinine by regulating egl-4 activity through the production of cGMP. Promotes the calcium flux to the cytoplasm in ASJ sensory neurons upon removal of a nitric oxide (NO) stimulus and is thereby involved in the behavioral avoidance response to NO-producing organisms like P.aeruginosa. The polypeptide is Receptor-type guanylate cyclase gcy-27 (Caenorhabditis elegans).